The sequence spans 649 residues: Transcription factor tau 95 kDa subunit (649 aa).

A disordered region spans residues 1–21 (MPVEEPLATLSSIPDSSADQA). The span at 9–19 (TLSSIPDSSAD) shows a compositional bias: polar residues. Repeat 1 spans residues 221–239 (PSTDFQLPPPPKLSMVGFP). The segment at 221–419 (PSTDFQLPPP…PPLVFESDTP (199 aa)) is 2 X repeats, Pro-rich. The short motif at 296 to 300 (AKKTK) is the Nuclear localization signal element. Residues 400–419 (PIVKKNVPKPPPLVFESDTP) form repeat 2. Residues 556–612 (IAAGDDFDDNGAITEEPDDAALENEEMDTDQNLKVPASIDDDVDDVDADEEEQESFD) form a disordered region. Acidic residues-rich tracts occupy residues 560–584 (DDFDDNGAITEEPDDAALENEEMDT) and 594–610 (IDDDVDDVDADEEEQES). The residue at position 617 (Ser617) is a Phosphoserine.

This sequence belongs to the TFIIIC subunit 5 family. As to quaternary structure, component of the TFIIIC complex composed of TFC1, TFC3, TFC4, TFC6, TFC7 and TFC8. The subunits are organized in two globular domains, tauA and tauB, connected by a proteolysis-sensitive and flexible linker. Interacts with TFC3, TFC4 and TFC6.

The protein localises to the nucleus. In terms of biological role, TFIIIC mediates tRNA and 5S RNA gene activation by binding to intragenic promoter elements. Upstream of the transcription start site, TFIIIC assembles the initiation complex TFIIIB-TFIIIC-tDNA, which is sufficient for RNA polymerase III recruitment and function. Part of the tauA domain of TFIIIC that binds boxA DNA promoter sites of tRNA and similar genes. Participates in the interconnection of tauA with tauB via its contacts with TFC3 and TFC6. Serves as a scaffold critical for tauA-DNA spatial configuration and tauB-DNA stability. This chain is Transcription factor tau 95 kDa subunit (TFC1), found in Saccharomyces cerevisiae (strain ATCC 204508 / S288c) (Baker's yeast).